Here is a 654-residue protein sequence, read N- to C-terminus: Heat shock 70 kDa protein 2 (654 aa).

The span at 612–646 (AGGEGGAPGAGFPGAGGPGGFPGAGAGGAHSGGDD) shows a compositional bias: gly residues. The disordered stretch occupies residues 612–654 (AGGEGGAPGAGFPGAGGPGGFPGAGAGGAHSGGDDGPTVEEVD).

Belongs to the heat shock protein 70 family.

The chain is Heat shock 70 kDa protein 2 (HSP70-2) from Paracoccidioides lutzii (strain ATCC MYA-826 / Pb01) (Paracoccidioides brasiliensis).